Consider the following 419-residue polypeptide: 1,4-beta-D-glucan cellobiohydrolase CEL6B (419 aa).

The first 47 residues, 1 to 47, serve as a signal peptide directing secretion; the sequence is MGESFLLLQPASPALSPTPSSLLLGPTITMRADVLIAALATGALVAA. 2 residues coordinate substrate: Trp-111 and Ser-113. Residues Asp-152 and Asp-199 each act as proton donor in the active site. Residue Trp-247 participates in substrate binding. Residue Asn-284 is glycosylated (N-linked (GlcNAc...) asparagine). Asn-287 contacts substrate. A glycan (N-linked (GlcNAc...) asparagine) is linked at Asn-298. Trp-347 serves as a coordination point for substrate. N-linked (GlcNAc...) asparagine glycosylation occurs at Asn-364. Lys-375 and Glu-379 together coordinate substrate.

The protein belongs to the glycosyl hydrolase 6 (cellulase B) family. Both N- and O-glycosylated.

It localises to the secreted. It catalyses the reaction Hydrolysis of (1-&gt;4)-beta-D-glucosidic linkages in cellulose and cellotetraose, releasing cellobiose from the non-reducing ends of the chains.. Exoglucanase that plays an important function in biomass degradation by catalyzing the hydrolysis of the non-reducing end beta-1,4-glucosidic linkages in cellulose and cellotetraose to release cellobiose. Hydrolyzes crystalline and amorphous cellulose but is inactive on hydroxyethyl cellulose, mannan, galactomannan, xyloglucan, arabinoxylan, arabinan, xylan, and pectin. In Podospora anserina (strain S / ATCC MYA-4624 / DSM 980 / FGSC 10383) (Pleurage anserina), this protein is 1,4-beta-D-glucan cellobiohydrolase CEL6B.